A 354-amino-acid chain; its full sequence is Histidinol-phosphate aminotransferase (354 aa).

K210 is modified (N6-(pyridoxal phosphate)lysine).

Belongs to the class-II pyridoxal-phosphate-dependent aminotransferase family. Histidinol-phosphate aminotransferase subfamily. In terms of assembly, homodimer. Requires pyridoxal 5'-phosphate as cofactor.

It carries out the reaction L-histidinol phosphate + 2-oxoglutarate = 3-(imidazol-4-yl)-2-oxopropyl phosphate + L-glutamate. It participates in amino-acid biosynthesis; L-histidine biosynthesis; L-histidine from 5-phospho-alpha-D-ribose 1-diphosphate: step 7/9. The sequence is that of Histidinol-phosphate aminotransferase from Clostridium botulinum (strain 657 / Type Ba4).